A 303-amino-acid chain; its full sequence is Ornithine carbamoyltransferase (303 aa).

Carbamoyl phosphate contacts are provided by residues 52–55 (STRT), Gln-79, Arg-103, and 130–133 (HPCQ). Residues Asn-161, Asp-222, and 226–227 (SM) each bind L-ornithine. Residues 262-263 (CL) and Arg-290 contribute to the carbamoyl phosphate site.

Belongs to the aspartate/ornithine carbamoyltransferase superfamily. OTCase family.

The protein localises to the cytoplasm. It catalyses the reaction carbamoyl phosphate + L-ornithine = L-citrulline + phosphate + H(+). The protein operates within amino-acid biosynthesis; L-arginine biosynthesis; L-arginine from L-ornithine and carbamoyl phosphate: step 1/3. Its function is as follows. Reversibly catalyzes the transfer of the carbamoyl group from carbamoyl phosphate (CP) to the N(epsilon) atom of ornithine (ORN) to produce L-citrulline. This chain is Ornithine carbamoyltransferase, found in Geobacter metallireducens (strain ATCC 53774 / DSM 7210 / GS-15).